A 425-amino-acid polypeptide reads, in one-letter code: Formyl-CoA:oxalate CoA-transferase (425 aa).

CoA is bound by residues 17–18 (QS), R38, 72–75 (LDTK), 96–98 (NFG), R104, and 136–139 (KVYE). D168 (nucleophile) is an active-site residue. Position 247-249 (247-249 (GGQ)) interacts with substrate.

The protein belongs to the CoA-transferase III family. Frc subfamily. In terms of assembly, homodimer.

The enzyme catalyses formyl-CoA + oxalate = oxalyl-CoA + formate. It functions in the pathway metabolic intermediate degradation; oxalate degradation; CO(2) and formate from oxalate: step 1/2. Involved in the catabolism of oxalate and in the adapatation to low pH via the induction of the oxalate-dependent acid tolerance response (ATR). Catalyzes the transfer of the CoA moiety from formyl-CoA to oxalate. The chain is Formyl-CoA:oxalate CoA-transferase from Rhodopseudomonas palustris (strain HaA2).